Reading from the N-terminus, the 105-residue chain is Heat shock protein HspQ (105 aa).

The segment at 75 to 105 is disordered; that stretch reads GEAQEAHPEQPSLDELAESIRHQLQAPRLRN.

The protein belongs to the HspQ family.

It is found in the cytoplasm. Functionally, involved in the degradation of certain denaturated proteins, including DnaA, during heat shock stress. This Serratia proteamaculans (strain 568) protein is Heat shock protein HspQ.